Consider the following 204-residue polypeptide: Protein GrpE (204 aa).

The interval 1–52 is disordered; sequence MSSKNNPESETKAKNKWEKVMEAEEEQEEGGGDGSQEMEPHREGLEFPSREK. Basic and acidic residues-rich tracts occupy residues 7-22 and 38-52; these read PESE…KVME and MEPH…SREK.

The protein belongs to the GrpE family. In terms of assembly, homodimer.

The protein localises to the cytoplasm. Functionally, participates actively in the response to hyperosmotic and heat shock by preventing the aggregation of stress-denatured proteins, in association with DnaK and GrpE. It is the nucleotide exchange factor for DnaK and may function as a thermosensor. Unfolded proteins bind initially to DnaJ; upon interaction with the DnaJ-bound protein, DnaK hydrolyzes its bound ATP, resulting in the formation of a stable complex. GrpE releases ADP from DnaK; ATP binding to DnaK triggers the release of the substrate protein, thus completing the reaction cycle. Several rounds of ATP-dependent interactions between DnaJ, DnaK and GrpE are required for fully efficient folding. The chain is Protein GrpE from Coxiella burnetii (strain Dugway 5J108-111).